A 105-amino-acid polypeptide reads, in one-letter code: Probable tetrachloroethene reductive dehalogenase membrane anchor protein (105 aa).

3 helical membrane passes run 3–23, 35–55, and 66–86; these read IYDVLIWMALGMIALLIQYGI, IPLQICGFLANFFFIFALAWG, and AIGMGFIFFGGTALIPAIITY.

Belongs to the PceB family.

The protein resides in the cell membrane. May act as a membrane anchor for the tetrachloroethene reductive dehalogenase PceA. The polypeptide is Probable tetrachloroethene reductive dehalogenase membrane anchor protein (Desulfitobacterium hafniense (Desulfitobacterium frappieri)).